We begin with the raw amino-acid sequence, 1001 residues long: MSPNRWILLLIFYISYLMFGAAIYYHIEHGEEKISRAEQRKAQIAINEYLLEELGDKNTTTQDEILQRISDYCDKPVTLPPTYDDTPYTWTFYHAFFFAFTVCSTVGYGNISPTTFAGRMIMIAYSVIGIPVNGILFAGLGEYFGRTFEAIYRRYKKYKMSTDMHYVPPQLGLITTVVIALIPGIALFLLLPSWVFTYFENWPYSISLYYSYVTTTTIGFGDYVPTFGANQPKEFGGWFVVYQIFVIVWFIFSLGYLVMIMTFITRGLQSKKLAYLEQQLSSNLKATQNRIWSGVTKDVGYLRRMLNELYILKVKPVYTDVDIAYTLPRSNSCPDLSMYRVEPAPIPSRKRAFSVCADMVAAQREAGMVHANSDTELSKLDREKTFETAEAYRQTTDLLAKVVNALATVKPPPAEQEDAALYGGYHGFSDSQILASEWSFSTVNEFTSPRRPRARACSDFNLEAPRWQSERPLRSSHNEWTWSGDNQQIQEAFNQRYKGQQRANGAANSTMVHLEPDALEEQLKKQSPGAGRVKKFSMPDGLRRLFPFQKKRPSQDLERKLSVVSVPEGVISQQARSPLDYYSNTVTAASSQSYLRNGRGPPPPFESNGSLASGGGGLTNMGFQMEDGATPPSALGGGAYQRKAAAGKRRRESIYTQNQAPSARRGSMYPPTAHALAQMQMRRGSLATSGSGSAAMAAVAARRGSLFPATASASSLTSAPRRSSIFSVTSEKDMNVLEQTTIADLIRALEVVHTHAVLDEQQQAAAAGGAAGGGGISRGSRKQRKMGNAGLEPPQLPPILSLFAGDQTRTLQAAAANRLYARRSTIVGISPTGGAATAPAARSLLEPPPSYTERAANQSQITAGPSNAPTVQSKFRRRFSVRPTALQIPPGQAPPPGASLMEQSSQTALQRRLSLRPSPLARELSPTSPPGGSGSALPAGAIDESGGTSAQRLLPLPAGTRPSTSSTHSPLSRIVQISQAQRKSSMPSAAATGSSGAPAEK.

At 1–6 (MSPNRW) the chain is on the cytoplasmic side. A helical membrane pass occupies residues 7-27 (ILLLIFYISYLMFGAAIYYHI). N-linked (GlcNAc...) asparagine glycosylation is present at N58. The pore-forming intramembrane region spans 95–111 (AFFFAFTVCSTVGYGNI). A helical transmembrane segment spans residues 120-140 (MIMIAYSVIGIPVNGILFAGL). At 141 to 170 (GEYFGRTFEAIYRRYKKYKMSTDMHYVPPQ) the chain is on the cytoplasmic side. The chain crosses the membrane as a helical span at residues 171–191 (LGLITTVVIALIPGIALFLLL). The pore-forming intramembrane region spans 208 to 224 (LYYSYVTTTTIGFGDYV). A helical transmembrane segment spans residues 244–264 (IFVIVWFIFSLGYLVMIMTFI). Residues 265–1001 (TRGLQSKKLA…TGSSGAPAEK (737 aa)) lie on the Cytoplasmic side of the membrane. S332, S373, S562, and S565 each carry phosphoserine. The interval 591 to 668 (SQSYLRNGRG…QAPSARRGSM (78 aa)) is disordered. 3 positions are modified to phosphoserine: S685, S691, and S715. Disordered regions lie at residues 768-795 (GGAAGGGGISRGSRKQRKMGNAGLEPPQ) and 830-1001 (SPTG…PAEK). Residues 832–841 (TGGAATAPAA) are compositionally biased toward low complexity. A compositionally biased stretch (polar residues) spans 855 to 873 (AANQSQITAGPSNAPTVQS). Residues 911 to 926 (RRLSLRPSPLARELSP) show a composition bias toward low complexity. Polar residues predominate over residues 961 to 983 (RPSTSSTHSPLSRIVQISQAQRK). A compositionally biased stretch (low complexity) spans 984–1001 (SSMPSAAATGSSGAPAEK).

The protein belongs to the two pore domain potassium channel (TC 1.A.1.8) family. Widespread expression in adult, strongest expression in muscle, brain and ovary. Also present at low levels in larva and embryo.

It is found in the membrane. Its function is as follows. Background potassium channel. Rectification is dependent on external potassium concentration. Acts as an outwardly rectifying channel but as external potassium levels increase, this is reversed. This is Open rectifier potassium channel protein 1 (Ork1) from Drosophila melanogaster (Fruit fly).